A 238-amino-acid polypeptide reads, in one-letter code: D-aminoacyl-tRNA deacylase (238 aa).

The protein belongs to the DtdA deacylase family. In terms of assembly, monomer. Zn(2+) serves as cofactor.

It carries out the reaction a D-aminoacyl-tRNA + H2O = a tRNA + a D-alpha-amino acid + H(+). The catalysed reaction is glycyl-tRNA(Ala) + H2O = tRNA(Ala) + glycine + H(+). The enzyme catalyses D-tyrosyl-tRNA(Tyr) + H2O = D-tyrosine + tRNA(Tyr). Its function is as follows. D-aminoacyl-tRNA deacylase with broad substrate specificity. By recycling D-aminoacyl-tRNA to D-amino acids and free tRNA molecules, this enzyme counteracts the toxicity associated with the formation of D-aminoacyl-tRNA entities in vivo. Catalyzes the hydrolysis of D-tyrosyl-tRNA(Tyr). The polypeptide is D-aminoacyl-tRNA deacylase (Saccharolobus solfataricus (strain ATCC 35092 / DSM 1617 / JCM 11322 / P2) (Sulfolobus solfataricus)).